The sequence spans 82 residues: Putative membrane protein insertion efficiency factor (82 aa).

This sequence belongs to the UPF0161 family.

It localises to the cell inner membrane. Its function is as follows. Could be involved in insertion of integral membrane proteins into the membrane. This Rickettsia felis (strain ATCC VR-1525 / URRWXCal2) (Rickettsia azadi) protein is Putative membrane protein insertion efficiency factor.